The sequence spans 179 residues: ATP synthase subunit delta (179 aa).

It belongs to the ATPase delta chain family. F-type ATPases have 2 components, F(1) - the catalytic core - and F(0) - the membrane proton channel. F(1) has five subunits: alpha(3), beta(3), gamma(1), delta(1), epsilon(1). F(0) has three main subunits: a(1), b(2) and c(10-14). The alpha and beta chains form an alternating ring which encloses part of the gamma chain. F(1) is attached to F(0) by a central stalk formed by the gamma and epsilon chains, while a peripheral stalk is formed by the delta and b chains.

The protein localises to the cell inner membrane. Functionally, f(1)F(0) ATP synthase produces ATP from ADP in the presence of a proton or sodium gradient. F-type ATPases consist of two structural domains, F(1) containing the extramembraneous catalytic core and F(0) containing the membrane proton channel, linked together by a central stalk and a peripheral stalk. During catalysis, ATP synthesis in the catalytic domain of F(1) is coupled via a rotary mechanism of the central stalk subunits to proton translocation. In terms of biological role, this protein is part of the stalk that links CF(0) to CF(1). It either transmits conformational changes from CF(0) to CF(1) or is implicated in proton conduction. The sequence is that of ATP synthase subunit delta from Paraburkholderia phymatum (strain DSM 17167 / CIP 108236 / LMG 21445 / STM815) (Burkholderia phymatum).